The chain runs to 204 residues: Ribosome maturation factor RimP (204 aa).

The tract at residues N177 to H204 is disordered. Positions S181–E198 are enriched in acidic residues.

This sequence belongs to the RimP family.

The protein localises to the cytoplasm. Its function is as follows. Required for maturation of 30S ribosomal subunits. The chain is Ribosome maturation factor RimP from Cereibacter sphaeroides (strain ATCC 17025 / ATH 2.4.3) (Rhodobacter sphaeroides).